We begin with the raw amino-acid sequence, 102 residues long: MIVPLLHVLILAGILFVLGLTCVLVWRSNIIMMLIGIEIMLNAAMLAFVGGANRWGAADGQVFALMIIAMTSAEVSLALALVVYLHRRKKTVNADEFSDMKG.

3 helical membrane passes run 5-25, 30-50, and 62-82; these read LLHV…CVLV, IIMM…AFVG, and VFAL…LALV.

It belongs to the complex I subunit 4L family. NDH-1 is composed of 14 different subunits. Subunits NuoA, H, J, K, L, M, N constitute the membrane sector of the complex.

The protein resides in the cell inner membrane. It carries out the reaction a quinone + NADH + 5 H(+)(in) = a quinol + NAD(+) + 4 H(+)(out). In terms of biological role, NDH-1 shuttles electrons from NADH, via FMN and iron-sulfur (Fe-S) centers, to quinones in the respiratory chain. The immediate electron acceptor for the enzyme in this species is believed to be ubiquinone. Couples the redox reaction to proton translocation (for every two electrons transferred, four hydrogen ions are translocated across the cytoplasmic membrane), and thus conserves the redox energy in a proton gradient. The polypeptide is NADH-quinone oxidoreductase subunit K 1 (Geotalea uraniireducens (strain Rf4) (Geobacter uraniireducens)).